We begin with the raw amino-acid sequence, 520 residues long: Amine oxidase [flavin-containing] B (520 aa).

S2 carries the post-translational modification N-acetylserine. The Cytoplasmic portion of the chain corresponds to 2–489 (SSKCDVVVVG…TFLQRHLPSV (488 aa)). Position 52 is an N6-acetyllysine (K52). At C397 the chain carries S-8alpha-FAD cysteine. A helical; Anchor for type IV membrane protein transmembrane segment spans residues 490 to 516 (PGLLKLIGLTTIFSATALGFLAHKRGL). Topologically, residues 517 to 520 (LVRI) are mitochondrial intermembrane.

In terms of assembly, monomer, homo- or heterodimer (containing two subunits of similar size). Each subunit contains a covalently bound flavin. Enzymatically active as monomer. Requires FAD as cofactor.

It localises to the mitochondrion outer membrane. It carries out the reaction a secondary aliphatic amine + O2 + H2O = a primary amine + an aldehyde + H2O2. It catalyses the reaction a primary methyl amine + O2 + H2O = an aldehyde + H2O2 + NH4(+). The enzyme catalyses benzylamine + O2 + H2O = benzaldehyde + H2O2 + NH4(+). The catalysed reaction is (R)-adrenaline + O2 + H2O = (R)-3,4-dihydroxymandelaldehyde + methylamine + H2O2. It carries out the reaction dopamine + O2 + H2O = 3,4-dihydroxyphenylacetaldehyde + H2O2 + NH4(+). It catalyses the reaction tyramine + O2 + H2O = (4-hydroxyphenyl)acetaldehyde + H2O2 + NH4(+). The enzyme catalyses (R)-noradrenaline + O2 + H2O = (R)-3,4-dihydroxymandelaldehyde + H2O2 + NH4(+). The catalysed reaction is 2-phenylethylamine + O2 + H2O = 2-phenylacetaldehyde + H2O2 + NH4(+). It carries out the reaction N-acetylputrescine + O2 + H2O = 4-acetamidobutanal + H2O2 + NH4(+). Its function is as follows. Catalyzes the oxidative deamination of primary and some secondary amines such as neurotransmitters, and exogenous amines including the tertiary amine, neurotoxin 1-methyl-4-phenyl-1,2,3,6-tetrahydropyridine (MPTP), with concomitant reduction of oxygen to hydrogen peroxide and participates in the metabolism of neuroactive and vasoactive amines in the central nervous system and peripheral tissues. Preferentially degrades benzylamine and phenylethylamine. The polypeptide is Amine oxidase [flavin-containing] B (Bos taurus (Bovine)).